A 799-amino-acid polypeptide reads, in one-letter code: Lon protease 4 (799 aa).

The 190-residue stretch at Phe-15 to Ser-204 folds into the Lon N-terminal domain. Gly-356–Thr-363 provides a ligand contact to ATP. One can recognise a Lon proteolytic domain in the interval Thr-595 to Glu-776. Catalysis depends on residues Ser-682 and Lys-725.

Belongs to the peptidase S16 family. Homohexamer. Organized in a ring with a central cavity.

The protein resides in the cytoplasm. It catalyses the reaction Hydrolysis of proteins in presence of ATP.. Functionally, ATP-dependent serine protease that mediates the selective degradation of mutant and abnormal proteins as well as certain short-lived regulatory proteins. Required for cellular homeostasis and for survival from DNA damage and developmental changes induced by stress. Degrades polypeptides processively to yield small peptide fragments that are 5 to 10 amino acids long. Binds to DNA in a double-stranded, site-specific manner. This chain is Lon protease 4, found in Sorangium cellulosum (strain So ce56) (Polyangium cellulosum (strain So ce56)).